We begin with the raw amino-acid sequence, 179 residues long: Bifunctional protein PyrR (179 aa).

Residues 39-40 (RR), 101-109 (DDVLFTGRT), Arg134, and Val158 each bind substrate. A PRPP-binding motif is present at residues 97–109 (VILIDDVLFTGRT).

The protein belongs to the purine/pyrimidine phosphoribosyltransferase family. PyrR subfamily.

It catalyses the reaction UMP + diphosphate = 5-phospho-alpha-D-ribose 1-diphosphate + uracil. In terms of biological role, regulates the transcription of the pyrimidine nucleotide (pyr) operon in response to exogenous pyrimidines. Functionally, also displays a weak uracil phosphoribosyltransferase activity which is not physiologically significant. The protein is Bifunctional protein PyrR of Haemophilus ducreyi (strain 35000HP / ATCC 700724).